The chain runs to 378 residues: Pulmonary surfactant-associated protein D (378 aa).

An N-terminal signal peptide occupies residues 1–20 (MLLLPLSVLILLTQPPRSLG). C35 and C40 each carry S-nitrosocysteine. The disordered stretch occupies residues 43 to 221 (MENGLPGRDG…ERGAKGESGL (179 aa)). Residues 46 to 222 (GLPGRDGRDG…RGAKGESGLP (177 aa)) enclose the Collagen-like domain. Positions 50–65 (RDGRDGREGPRGEKGD) are enriched in basic and acidic residues. The residue at position 78 (P78) is a 4-hydroxyproline. K87 bears the 5-hydroxylysine mark. N-linked (GlcNAc...) asparagine glycosylation occurs at N90. P96 bears the 4-hydroxyproline mark. 5-hydroxylysine is present on K99. Pro residues predominate over residues 105–114 (CGPPGPPGIP). A compositionally biased stretch (low complexity) spans 137-146 (PKGETGPKGE). P171 and P177 each carry 4-hydroxyproline. Residues 173-197 (ERGAPGSAGAAGPAGATGPQGPSGA) show a composition bias toward low complexity. Residues 204-216 (KGDRGPPGERGAK) are compositionally biased toward basic and acidic residues. Residues 223 to 254 (GITALRQQVETLQGQVQRLQKAFSQYKKVELF) are a coiled coil. The C-type lectin domain occupies 260 to 378 (VGEKIFKTGG…GELRLVICEF (119 aa)). 2 cysteine pairs are disulfide-bonded: C281–C376 and C354–C368. An N-linked (GlcNAc...) asparagine glycan is attached at N323.

This sequence belongs to the SFTPD family. In terms of assembly, oligomeric complex of 4 set of homotrimers. Hydroxylation on proline residues within the sequence motif, GXPG, is most likely to be 4-hydroxy as this fits the requirement for 4-hydroxylation in vertebrates. Post-translationally, S-nitrosylation at Cys-35 and Cys-40 alters the quaternary structure which results in a pro-inflammatory chemoattractive signaling activity with macrophages.

It is found in the secreted. Its subcellular location is the extracellular space. The protein resides in the extracellular matrix. The protein localises to the surface film. Its function is as follows. Contributes to the lung's defense against inhaled microorganisms, organic antigens and toxins. Interacts with compounds such as bacterial lipopolysaccharides, oligosaccharides and fatty acids and modulates leukocyte action in immune response. May participate in the extracellular reorganization or turnover of pulmonary surfactant. Binds strongly maltose residues and to a lesser extent other alpha-glucosyl moieties. The chain is Pulmonary surfactant-associated protein D (SFTPD) from Sus scrofa (Pig).